A 380-amino-acid chain; its full sequence is Cytochrome b (380 aa).

4 helical membrane-spanning segments follow: residues 34 to 54, 78 to 99, 114 to 134, and 179 to 199; these read FGSL…LLAT, WLIR…YLHI, WNTG…GYVL, and FFAL…IHLT. His84 and His98 together coordinate heme b. Heme b-binding residues include His183 and His197. His202 contributes to the a ubiquinone binding site. 4 helical membrane-spanning segments follow: residues 227-247, 289-309, 321-341, and 348-368; these read LKDI…ALFS, LGGV…PLLH, LSQL…WVGS, and FIII…LLFP.

The protein belongs to the cytochrome b family. In terms of assembly, the cytochrome bc1 complex contains 11 subunits: 3 respiratory subunits (MT-CYB, CYC1 and UQCRFS1), 2 core proteins (UQCRC1 and UQCRC2) and 6 low-molecular weight proteins (UQCRH/QCR6, UQCRB/QCR7, UQCRQ/QCR8, UQCR10/QCR9, UQCR11/QCR10 and a cleavage product of UQCRFS1). This cytochrome bc1 complex then forms a dimer. Heme b is required as a cofactor.

Its subcellular location is the mitochondrion inner membrane. In terms of biological role, component of the ubiquinol-cytochrome c reductase complex (complex III or cytochrome b-c1 complex) that is part of the mitochondrial respiratory chain. The b-c1 complex mediates electron transfer from ubiquinol to cytochrome c. Contributes to the generation of a proton gradient across the mitochondrial membrane that is then used for ATP synthesis. In Cepphus grylle (Black guillemot), this protein is Cytochrome b (MT-CYB).